Reading from the N-terminus, the 400-residue chain is tRNA-specific 2-thiouridylase MnmA (400 aa).

Residues 19–26 and Leu-45 each bind ATP; that span reads AMSGGVDS. Cys-113 acts as the Nucleophile in catalysis. An intrachain disulfide couples Cys-113 to Cys-210. Residue Gly-137 coordinates ATP. The interval 160 to 162 is interaction with tRNA; sequence RDQ. Cys-210 functions as the Cysteine persulfide intermediate in the catalytic mechanism.

Belongs to the MnmA/TRMU family.

It is found in the cytoplasm. The catalysed reaction is S-sulfanyl-L-cysteinyl-[protein] + uridine(34) in tRNA + AH2 + ATP = 2-thiouridine(34) in tRNA + L-cysteinyl-[protein] + A + AMP + diphosphate + H(+). Functionally, catalyzes the 2-thiolation of uridine at the wobble position (U34) of tRNA, leading to the formation of s(2)U34. The sequence is that of tRNA-specific 2-thiouridylase MnmA from Rhodopseudomonas palustris (strain BisA53).